The chain runs to 156 residues: ATP synthase subunit b (156 aa).

The helical transmembrane segment at 3 to 23 (INFTLLAQALAFAGLIWIIAT) threads the bilayer.

The protein belongs to the ATPase B chain family. In terms of assembly, F-type ATPases have 2 components, F(1) - the catalytic core - and F(0) - the membrane proton channel. F(1) has five subunits: alpha(3), beta(3), gamma(1), delta(1), epsilon(1). F(0) has three main subunits: a(1), b(2) and c(10-14). The alpha and beta chains form an alternating ring which encloses part of the gamma chain. F(1) is attached to F(0) by a central stalk formed by the gamma and epsilon chains, while a peripheral stalk is formed by the delta and b chains.

It is found in the cell membrane. Functionally, f(1)F(0) ATP synthase produces ATP from ADP in the presence of a proton or sodium gradient. F-type ATPases consist of two structural domains, F(1) containing the extramembraneous catalytic core and F(0) containing the membrane proton channel, linked together by a central stalk and a peripheral stalk. During catalysis, ATP synthesis in the catalytic domain of F(1) is coupled via a rotary mechanism of the central stalk subunits to proton translocation. In terms of biological role, component of the F(0) channel, it forms part of the peripheral stalk, linking F(1) to F(0). The sequence is that of ATP synthase subunit b from Stenotrophomonas maltophilia (strain K279a).